Reading from the N-terminus, the 473-residue chain is Photosystem II CP43 reaction center protein (473 aa).

Positions Met1–Glu14 are excised as a propeptide. Thr15 carries the N-acetylthreonine modification. The residue at position 15 (Thr15) is a Phosphothreonine. 5 helical membrane passes run Leu69–Ala93, Leu134–Asn155, Lys178–Thr200, Lys255–Ser275, and Trp291–Ala312. A [CaMn4O5] cluster-binding site is contributed by Glu367. Residues Arg447–Pro471 traverse the membrane as a helical segment.

It belongs to the PsbB/PsbC family. PsbC subfamily. In terms of assembly, PSII is composed of 1 copy each of membrane proteins PsbA, PsbB, PsbC, PsbD, PsbE, PsbF, PsbH, PsbI, PsbJ, PsbK, PsbL, PsbM, PsbT, PsbX, PsbY, PsbZ, Psb30/Ycf12, at least 3 peripheral proteins of the oxygen-evolving complex and a large number of cofactors. It forms dimeric complexes. The cofactor is Binds multiple chlorophylls and provides some of the ligands for the Ca-4Mn-5O cluster of the oxygen-evolving complex. It may also provide a ligand for a Cl- that is required for oxygen evolution. PSII binds additional chlorophylls, carotenoids and specific lipids..

The protein localises to the plastid. The protein resides in the chloroplast thylakoid membrane. One of the components of the core complex of photosystem II (PSII). It binds chlorophyll and helps catalyze the primary light-induced photochemical processes of PSII. PSII is a light-driven water:plastoquinone oxidoreductase, using light energy to abstract electrons from H(2)O, generating O(2) and a proton gradient subsequently used for ATP formation. In Phaseolus vulgaris (Kidney bean), this protein is Photosystem II CP43 reaction center protein.